The sequence spans 382 residues: Sphingoid long-chain base transporter RSB1 (382 aa).

The Extracellular portion of the chain corresponds to 1-34; the sequence is MSNATNNTLGSLLPQLEAAANSNSLYGGMVPNLR. N-linked (GlcNAc...) asparagine glycans are attached at residues asparagine 3 and asparagine 6. Residues 35-55 traverse the membrane as a helical segment; sequence FNITMIVIWGILLTIHVVQLL. The Cytoplasmic portion of the chain corresponds to 56 to 57; that stretch reads MR. A helical membrane pass occupies residues 58–78; it reads QYWFSIAFICTGILEVLGYIG. Topologically, residues 79–90 are extracellular; it reads RTWSHSNVADMD. The helical transmembrane segment at 91 to 111 threads the bilayer; it reads AFLLNMICLTIAPVFTMGGIY. The Cytoplasmic portion of the chain corresponds to 112–135; sequence YQLAKLIEVYGHRFSLLPSPMAYS. The helical transmembrane segment at 136–156 threads the bilayer; that stretch reads FIFICSDIVSLVVQAVGGGLC. At 157 to 171 the chain is on the extracellular side; the sequence is GVAVTDGTSTTTGNH. A helical transmembrane segment spans residues 172 to 192; it reads VFIAGLAIQVASMAIFLMLWF. Residues 193–241 are Cytoplasmic-facing; the sequence is HFLFRIYISVRWEHINSRPISLSLLKISQTEVDYLYREKFHFLRLEPKR. Residues 242–262 form a helical membrane-spanning segment; sequence WVFHYFNLAMTVAVLTIFTRC. Topologically, residues 263-281 are extracellular; it reads CYRLAELVVGWDGYLITHE. Residues 282 to 302 form a helical membrane-spanning segment; it reads WYFIILDALMMAIATVTLTIF. Topologically, residues 303 to 382 are cytoplasmic; it reads HPGFAFKGRS…LFSSKKKAKL (80 aa).

The protein belongs to the lipid-translocating exporter (LTE) (TC 9.A.26.1) family.

The protein localises to the cell membrane. Catalyzes the ATP-dependent translocation of sphingoid long-chain bases (LCBs) from the cytoplasmic site toward the extracytoplasmic side of the membrane (flip-flop). Involved in the establishment of the functional lipid asymmetry of the plasma membrane. Regulates intracellular levels of LCBs, sphingolipid precursors that are growth inhibitory at increased levels. This Saccharomyces cerevisiae (strain Lalvin EC1118 / Prise de mousse) (Baker's yeast) protein is Sphingoid long-chain base transporter RSB1 (RSB1).